The following is a 241-amino-acid chain: Phosphoadenosine 5'-phosphosulfate reductase (241 aa).

The disordered stretch occupies residues 221–241 (GADPRSGRWRGKAKTECGLHA). Residue cysteine 237 is the Nucleophile; cysteine thiosulfonate intermediate of the active site.

It belongs to the PAPS reductase family. CysH subfamily.

The protein resides in the cytoplasm. The catalysed reaction is [thioredoxin]-disulfide + sulfite + adenosine 3',5'-bisphosphate + 2 H(+) = [thioredoxin]-dithiol + 3'-phosphoadenylyl sulfate. The protein operates within sulfur metabolism; hydrogen sulfide biosynthesis; sulfite from sulfate: step 3/3. Catalyzes the formation of sulfite from phosphoadenosine 5'-phosphosulfate (PAPS) using thioredoxin as an electron donor. This chain is Phosphoadenosine 5'-phosphosulfate reductase, found in Gloeobacter violaceus (strain ATCC 29082 / PCC 7421).